The chain runs to 96 residues: MAKYEILYIIRPNIEEEAKNALVARFDSILTDNGATVVESKDWEKRRLAYEIQDFREGLYHVVNVEANDATALNEFDRLSKINGDILRHMIVKLDA.

It belongs to the bacterial ribosomal protein bS6 family.

In terms of biological role, binds together with bS18 to 16S ribosomal RNA. This is Small ribosomal subunit protein bS6 from Streptococcus thermophilus (strain ATCC BAA-250 / LMG 18311).